We begin with the raw amino-acid sequence, 637 residues long: Chaperone protein HtpG (637 aa).

The interval 1–338 (MTSTIDKNGA…SADLPLNISR (338 aa)) is a; substrate-binding. The tract at residues 339-552 (EMIQESPILA…ESGPDRQLEK (214 aa)) is b. The c stretch occupies residues 553-637 (ILLGVGQLAG…LRRSSAGGGD (85 aa)).

This sequence belongs to the heat shock protein 90 family. In terms of assembly, homodimer.

Its subcellular location is the cytoplasm. Molecular chaperone. Has ATPase activity. The chain is Chaperone protein HtpG from Nitrobacter winogradskyi (strain ATCC 25391 / DSM 10237 / CIP 104748 / NCIMB 11846 / Nb-255).